Here is a 298-residue protein sequence, read N- to C-terminus: Transcription factor BOA (298 aa).

Disordered stretches follow at residues Met1–Ile26, Leu79–Arg143, and Glu206–Ser232. The segment covering Tyr10–Gly20 has biased composition (acidic residues). The segment covering Asp104–Gly113 has biased composition (basic and acidic residues). Residues Ser122 to Pro131 are compositionally biased toward acidic residues. The myb-like GARP DNA-binding region spans Thr138–Lys197. Residues Tyr209 to Gln227 show a composition bias toward polar residues.

It localises to the nucleus. In terms of biological role, transcription factor that is a critical component of the regulatory circuit of the circadian clock. Binds to specific sites on CCA1 promoter leading to CCA1 activation. Is required for the rhythmic expression of other clock genes such as LHY, GI and APRR1/TOC1. This chain is Transcription factor BOA (BOA), found in Arabidopsis thaliana (Mouse-ear cress).